A 260-amino-acid polypeptide reads, in one-letter code: Membrane protein insertase YidC 1 (260 aa).

Positions Met1–Gly22 are cleaved as a signal peptide. Cys23 carries the N-palmitoyl cysteine lipid modification. The S-diacylglycerol cysteine moiety is linked to residue Cys23. The next 5 membrane-spanning stretches (helical) occupy residues Ile29 to Ile49, Val52 to Ile72, Leu133 to Ile153, Phe164 to Leu184, and Met213 to Ile233.

Belongs to the OXA1/ALB3/YidC family. Type 2 subfamily.

The protein resides in the cell membrane. Its function is as follows. Required for the insertion and/or proper folding and/or complex formation of integral membrane proteins into the membrane. Involved in integration of membrane proteins that insert both dependently and independently of the Sec translocase complex, as well as at least some lipoproteins. This Bacillus anthracis protein is Membrane protein insertase YidC 1.